Reading from the N-terminus, the 283-residue chain is uncharacterized protein (283 aa).

3 Solcar repeats span residues Gln14–Leu95, Asn102–Val185, and Gly190–Gly274. Helical transmembrane passes span Thr20 to Ile40, Gly70 to Ser90, Ala105 to Leu125, Phe157 to Met177, Ala184 to Ala204, and Gly249 to Leu266.

It belongs to the mitochondrial carrier (TC 2.A.29) family.

The protein resides in the mitochondrion inner membrane. This is an uncharacterized protein from Schizosaccharomyces pombe (strain 972 / ATCC 24843) (Fission yeast).